The primary structure comprises 346 residues: Cell division protein ZipA (346 aa).

Topologically, residues 1–6 (MEDLQL) are periplasmic. Residues 7–27 (VLFVLGAIAIVAVLVHGFWSI) form a helical membrane-spanning segment. Topologically, residues 28–346 (RRQQPKSLKD…DYLHRIRANA (319 aa)) are cytoplasmic. 2 disordered regions span residues 76–103 (ANEAHTPEAPAFNPYLKQEAKTQPQPVE) and 121–145 (QPDFSLQSPTAKEQHRGPKASRQEP).

Belongs to the ZipA family. As to quaternary structure, interacts with FtsZ via their C-terminal domains.

The protein resides in the cell inner membrane. Functionally, essential cell division protein that stabilizes the FtsZ protofilaments by cross-linking them and that serves as a cytoplasmic membrane anchor for the Z ring. Also required for the recruitment to the septal ring of downstream cell division proteins. In Shewanella sp. (strain MR-4), this protein is Cell division protein ZipA.